Reading from the N-terminus, the 252-residue chain is MKILVSNDDGVLAPGIKILANELSTLGEVKVVAPDRNRSGASNSLTLTQPLRVKQLDNGYYSVDGTPTDCVHLALTGFLEPMADIVVSGINEGANLGDDVLYSGTVAAAMEGRYLGLPAIAISMVGDNIQHYETAAIIAKQLVIKLSANKLPSQTILNVNVPDLPLNQIRGLQVTRLGTRHSAEPIIKEYDPRGRPIYWVGPPGIEADAGAGTDFFAIKTGHVSITPLHLDMTHYKLFDHLSNLLNEICIEN.

A divalent metal cation contacts are provided by Asp8, Asp9, Ser39, and Asn91.

This sequence belongs to the SurE nucleotidase family. The cofactor is a divalent metal cation.

The protein resides in the cytoplasm. The catalysed reaction is a ribonucleoside 5'-phosphate + H2O = a ribonucleoside + phosphate. In terms of biological role, nucleotidase that shows phosphatase activity on nucleoside 5'-monophosphates. The sequence is that of 5'-nucleotidase SurE from Legionella pneumophila (strain Lens).